Here is a 284-residue protein sequence, read N- to C-terminus: Phosphatidylserine decarboxylase proenzyme (284 aa).

Active-site charge relay system; for autoendoproteolytic cleavage activity residues include Asp-88, His-145, and Ser-248. Ser-248 functions as the Schiff-base intermediate with substrate; via pyruvic acid; for decarboxylase activity in the catalytic mechanism. Residue Ser-248 is modified to Pyruvic acid (Ser); by autocatalysis.

It belongs to the phosphatidylserine decarboxylase family. PSD-B subfamily. Prokaryotic type I sub-subfamily. As to quaternary structure, heterodimer of a large membrane-associated beta subunit and a small pyruvoyl-containing alpha subunit. Pyruvate is required as a cofactor. Post-translationally, is synthesized initially as an inactive proenzyme. Formation of the active enzyme involves a self-maturation process in which the active site pyruvoyl group is generated from an internal serine residue via an autocatalytic post-translational modification. Two non-identical subunits are generated from the proenzyme in this reaction, and the pyruvate is formed at the N-terminus of the alpha chain, which is derived from the carboxyl end of the proenzyme. The autoendoproteolytic cleavage occurs by a canonical serine protease mechanism, in which the side chain hydroxyl group of the serine supplies its oxygen atom to form the C-terminus of the beta chain, while the remainder of the serine residue undergoes an oxidative deamination to produce ammonia and the pyruvoyl prosthetic group on the alpha chain. During this reaction, the Ser that is part of the protease active site of the proenzyme becomes the pyruvoyl prosthetic group, which constitutes an essential element of the active site of the mature decarboxylase.

It localises to the cell membrane. The catalysed reaction is a 1,2-diacyl-sn-glycero-3-phospho-L-serine + H(+) = a 1,2-diacyl-sn-glycero-3-phosphoethanolamine + CO2. The protein operates within phospholipid metabolism; phosphatidylethanolamine biosynthesis; phosphatidylethanolamine from CDP-diacylglycerol: step 2/2. In terms of biological role, catalyzes the formation of phosphatidylethanolamine (PtdEtn) from phosphatidylserine (PtdSer). The protein is Phosphatidylserine decarboxylase proenzyme of Albidiferax ferrireducens (strain ATCC BAA-621 / DSM 15236 / T118) (Rhodoferax ferrireducens).